A 287-amino-acid polypeptide reads, in one-letter code: Pantothenate synthetase (287 aa).

An ATP-binding site is contributed by 37–44 (MGALHEGH). The active-site Proton donor is the His44. Gln68 contributes to the (R)-pantoate binding site. Beta-alanine is bound at residue Gln68. 154–157 (GQKD) serves as a coordination point for ATP. Gln160 serves as a coordination point for (R)-pantoate. Residues Val183 and 191–194 (LSSR) each bind ATP.

This sequence belongs to the pantothenate synthetase family. As to quaternary structure, homodimer.

Its subcellular location is the cytoplasm. The catalysed reaction is (R)-pantoate + beta-alanine + ATP = (R)-pantothenate + AMP + diphosphate + H(+). It functions in the pathway cofactor biosynthesis; (R)-pantothenate biosynthesis; (R)-pantothenate from (R)-pantoate and beta-alanine: step 1/1. Catalyzes the condensation of pantoate with beta-alanine in an ATP-dependent reaction via a pantoyl-adenylate intermediate. The chain is Pantothenate synthetase from Leifsonia xyli subsp. xyli (strain CTCB07).